The chain runs to 200 residues: Pyridoxal 5'-phosphate synthase subunit PdxT (200 aa).

L-glutamine is bound at residue 52–54 (GES). Residue C84 is the Nucleophile of the active site. Residues R116 and 145-146 (IR) each bind L-glutamine. Residues H181 and E183 each act as charge relay system in the active site.

It belongs to the glutaminase PdxT/SNO family. In the presence of PdxS, forms a dodecamer of heterodimers. Only shows activity in the heterodimer.

It carries out the reaction aldehydo-D-ribose 5-phosphate + D-glyceraldehyde 3-phosphate + L-glutamine = pyridoxal 5'-phosphate + L-glutamate + phosphate + 3 H2O + H(+). It catalyses the reaction L-glutamine + H2O = L-glutamate + NH4(+). Its pathway is cofactor biosynthesis; pyridoxal 5'-phosphate biosynthesis. In terms of biological role, catalyzes the hydrolysis of glutamine to glutamate and ammonia as part of the biosynthesis of pyridoxal 5'-phosphate. The resulting ammonia molecule is channeled to the active site of PdxS. This chain is Pyridoxal 5'-phosphate synthase subunit PdxT, found in Sulfolobus acidocaldarius (strain ATCC 33909 / DSM 639 / JCM 8929 / NBRC 15157 / NCIMB 11770).